Consider the following 1312-residue polypeptide: DNA repair protein RAD50 (1312 aa).

10 residues coordinate ATP: Arg-13, Asn-38, Gly-39, Gly-41, Lys-42, Thr-43, Thr-44, Val-67, Asp-69, and Gln-159. Residue Thr-43 participates in Mg(2+) binding. A Mg(2+)-binding site is contributed by Gln-159. Coiled-coil stretches lie at residues Thr-228 to Arg-359, Arg-401 to Asn-598, and Ser-635 to Leu-673. A Phosphoserine; by ATM modification is found at Ser-635. Residues Ser-635–Pro-734 enclose the Zinc-hook domain. The Zn(2+) site is built by Cys-681 and Cys-684. The residue at position 690 (Thr-690) is a Phosphothreonine. Coiled-coil stretches lie at residues Arg-706–Pro-734 and Leu-789–Lys-1079. Lys-959 carries the N6-acetyllysine modification.

The protein belongs to the SMC family. RAD50 subfamily. In terms of assembly, component of the MRN complex composed of two heterodimers RAD50 and MRE11 associated with a single NBN. The MRN complexes dimerize on DNA to form joined MRN-MRN oligomers required for DNA double-strand break repair. As part of the MRN complex, interacts with MCM8 and MCM9; the interaction recruits the complex to DNA repair sites. Component of the BASC complex, at least composed of BRCA1, MSH2, MSH6, MLH1, ATM, BLM, RAD50, MRE11 and NBN. Found in a complex with TERF2. Interacts with RINT1. Interacts with BRCA1 via its N-terminal domain. Interacts with DCLRE1C/Artemis. Interacts with MRNIP. Interacts with CYREN (via XLF motif). Interacts with C1QBP and MRE11; interaction takes place in absence of DNA damage to form the MRC (MRE11-RAD50-C1QBP) complex that inhibits the activity of MRE11. (Microbial infection) Interacts with herpes simplex virus 1 protein UL12. Zn(2+) is required as a cofactor. Phosphorylation at Ser-635 by ATM in response to DNA damage is required for double-strand break (DSB) repair. As to expression, expressed at very low level in most tissues, except in testis where it is expressed at higher level. Expressed in fibroblasts.

It localises to the nucleus. Its subcellular location is the chromosome. It is found in the telomere. The catalysed reaction is ATP + H2O = ADP + phosphate + H(+). Its function is as follows. Component of the MRN complex, which plays a central role in double-strand break (DSB) repair, DNA recombination, maintenance of telomere integrity and meiosis. The MRN complex is involved in the repair of DNA double-strand breaks (DSBs) via homologous recombination (HR), an error-free mechanism which primarily occurs during S and G2 phases. The complex (1) mediates the end resection of damaged DNA, which generates proper single-stranded DNA, a key initial steps in HR, and is (2) required for the recruitment of other repair factors and efficient activation of ATM and ATR upon DNA damage. The MRN complex possesses single-strand endonuclease activity and double-strand-specific 3'-5' exonuclease activity, which are provided by MRE11, to initiate end resection, which is required for single-strand invasion and recombination. Within the complex, RAD50 is both required to bind DNA ends and hold them in close proximity and regulate the activity of MRE11. RAD50 provides an ATP-dependent control of MRE11 by positioning DNA ends into the MRE11 active site: ATP-binding induces a large structural change from an open form with accessible MRE11 nuclease sites into a closed form. The MRN complex is also required for DNA damage signaling via activation of the ATM and ATR kinases: the nuclease activity of MRE11 is not required to activate ATM and ATR. The MRN complex is also required for the processing of R-loops. In telomeres the MRN complex may modulate t-loop formation. This is DNA repair protein RAD50 from Homo sapiens (Human).